The sequence spans 467 residues: Indoleacetamide hydrolase (467 aa).

Residues K74 and S149 each act as charge relay system in the active site. Residue S173 is the Acyl-ester intermediate of the active site.

Belongs to the amidase family.

Its pathway is plant hormone metabolism; auxin biosynthesis. Its function is as follows. Hydrolyzes indole-3-acetamide (IAM) into indole-3-acetic acid (IAA). The protein is Indoleacetamide hydrolase (tms2) of Rhizobium radiobacter (Agrobacterium tumefaciens).